The chain runs to 113 residues: Nitrogenase vanadium-iron protein delta chain (113 aa).

As to quaternary structure, hexamer of two alpha, two beta, and two delta chains. Iron-sulfur cluster serves as cofactor. The cofactor is vanadium cation.

It catalyses the reaction N2 + 8 reduced [2Fe-2S]-[ferredoxin] + 16 ATP + 16 H2O = H2 + 8 oxidized [2Fe-2S]-[ferredoxin] + 2 NH4(+) + 16 ADP + 16 phosphate + 6 H(+). Functionally, the key enzymatic reactions in nitrogen fixation are catalyzed by the nitrogenase complex, which has 2 components: the iron protein (component 2) and a component 1 which is either a molybdenum-iron protein, a vanadium-iron, or an iron-iron protein. The protein is Nitrogenase vanadium-iron protein delta chain (vnfG) of Azotobacter salinestris.